Reading from the N-terminus, the 344-residue chain is Ion-translocating oxidoreductase complex subunit D (344 aa).

Helical transmembrane passes span 23 to 43, 44 to 64, 77 to 99, and 120 to 140; these read LVLGACVPGLLTLTWLYGPGT, LLNLAWASLVALACEAAMLAL, SALVTALLLAVALPPYAPWWLTL, and PFNPAMLGYVVALVSFPLEMT. T172 carries the post-translational modification FMN phosphoryl threonine. The next 5 helical transmembrane spans lie at 198–218, 222–242, 252–272, 285–305, and 306–326; these read LGSAGSEWVNLAFLLGGLFLL, LFTWHAPLGMLAGLFAMSLLF, GSPLFHLFSGATMLGAFFIVT, LVFGLGVGVLTYVIRAWGGYP, and DGVAFAVLLMNLAAPTIDYYT.

The protein belongs to the NqrB/RnfD family. As to quaternary structure, the complex is composed of six subunits: RnfA, RnfB, RnfC, RnfD, RnfE and RnfG. FMN is required as a cofactor.

The protein localises to the cell inner membrane. Part of a membrane-bound complex that couples electron transfer with translocation of ions across the membrane. The sequence is that of Ion-translocating oxidoreductase complex subunit D from Pseudomonas aeruginosa (strain UCBPP-PA14).